Reading from the N-terminus, the 221-residue chain is UPF0502 protein Sputcn32_1644 (221 aa).

It belongs to the UPF0502 family.

The protein is UPF0502 protein Sputcn32_1644 of Shewanella putrefaciens (strain CN-32 / ATCC BAA-453).